A 132-amino-acid chain; its full sequence is MGNDTITNLITSIRNADMVEKGTVRVTATNITKNIGRILLREGFIEDVREHQEGQKYFLISTSKYRRRKKRTYMTTSKRTSKPGLRIYSNYREIPKVLGGMGIVILSTSQGILTDREARQKKIGGEILCYVW.

The protein belongs to the universal ribosomal protein uS8 family. As to quaternary structure, part of the 30S ribosomal subunit.

The protein resides in the plastid. The protein localises to the chloroplast. Functionally, one of the primary rRNA binding proteins, it binds directly to 16S rRNA central domain where it helps coordinate assembly of the platform of the 30S subunit. The polypeptide is Small ribosomal subunit protein uS8c (rps8) (Pinus thunbergii (Japanese black pine)).